A 336-amino-acid chain; its full sequence is Ornithine carbamoyltransferase, catabolic (336 aa).

Carbamoyl phosphate-binding positions include 57–60 (STRT), Q84, R108, and 136–139 (HPTQ). L-ornithine-binding positions include N169, D233, and 237–238 (SM). Residues 275-276 (CL) and R322 each bind carbamoyl phosphate.

It belongs to the aspartate/ornithine carbamoyltransferase superfamily. OTCase family.

Its subcellular location is the cytoplasm. The enzyme catalyses carbamoyl phosphate + L-ornithine = L-citrulline + phosphate + H(+). It functions in the pathway amino-acid degradation; L-arginine degradation via ADI pathway; carbamoyl phosphate from L-arginine: step 2/2. Functionally, reversibly catalyzes the transfer of the carbamoyl group from carbamoyl phosphate (CP) to the N(epsilon) atom of ornithine (ORN) to produce L-citrulline. This Chromobacterium violaceum (strain ATCC 12472 / DSM 30191 / JCM 1249 / CCUG 213 / NBRC 12614 / NCIMB 9131 / NCTC 9757 / MK) protein is Ornithine carbamoyltransferase, catabolic.